The sequence spans 234 residues: Zein-alpha 19B1 (234 aa).

Positions 1–21 (MAAKIFCLLMLLGLSASAATA) are cleaved as a signal peptide.

The protein belongs to the zein family.

Functionally, zeins are major seed storage proteins. The sequence is that of Zein-alpha 19B1 from Zea mays (Maize).